We begin with the raw amino-acid sequence, 850 residues long: Protein stoned-A (850 aa).

Residues 1 to 16 (MLKLPKGLKKKKKKSK) are compositionally biased toward basic residues. 2 disordered regions span residues 1-95 (MLKL…AAGG) and 125-164 (KESF…LGQI). Residues 26 to 290 (ELEQYKRDLK…QNLLLSESIE (265 aa)) form an interaction with Syt region. Over residues 28–38 (EQYKRDLKAKQ) the composition is skewed to basic and acidic residues. A compositionally biased stretch (polar residues) spans 78 to 91 (ILNAQQQLSDQNQG). A compositionally biased stretch (basic and acidic residues) spans 136–164 (AEKKKQKEEEAARLEAEQQEREKQRLGQI). A DPF 1 motif is present at residues 224–226 (DPF). Disordered regions lie at residues 345–375 (EEEE…EEDD) and 412–498 (GSWA…PPFL). Pro residues predominate over residues 431–440 (PPPPVRPPTG). The segment covering 451 to 462 (SEDEEENPEDDP) has biased composition (acidic residues). 2 short sequence motifs (DPF) span residues 461 to 463 (DPF) and 535 to 537 (DPF). 4 disordered regions span residues 573-610 (HSLS…QRKS), 634-673 (GNEL…TSHV), 738-760 (RKKL…FDTS), and 800-825 (LGLG…IDPF). 2 stretches are compositionally biased toward basic and acidic residues: residues 574–588 (SLSD…DQKE) and 596–607 (LEQKETDFDTAQ). 3 short sequence motifs (DPF) span residues 666–668 (DPF), 755–757 (DPF), and 823–825 (DPF).

As to quaternary structure, interacts with the second C2 domain of Syt.

The protein resides in the cytoplasm. Its subcellular location is the synapse. The protein localises to the cytoplasmic vesicle. It is found in the secretory vesicle. It localises to the synaptic vesicle. Its function is as follows. Adapter protein involved in endocytic recycling of synaptic vesicles membranes. May act by mediating the retrieval of synaptotagmin protein Syt from the plasma membrane, thereby facilitating the internalization of multiple synaptic vesicles from the plasma membrane. The polypeptide is Protein stoned-A (stnA) (Drosophila melanogaster (Fruit fly)).